A 1715-amino-acid chain; its full sequence is Sodium channel protein type 4 subunit alpha B (1715 aa).

The Cytoplasmic segment spans residues 1 to 126; it reads MGTLLPPVGS…IFAIKILVHS (126 aa). Residues 108-431 form an I repeat; that stretch reads LLSPFNSMRI…VVAMAYAEQN (324 aa). A helical membrane pass occupies residues 127–145; it reads LFSLFIMATILTNCVFMTL. Residues 146 to 152 lie on the Extracellular side of the membrane; sequence SDPPAWS. A helical transmembrane segment spans residues 153-173; the sequence is KTVEYVFTFIYTFEATIKVVS. Residues 174–187 lie on the Cytoplasmic side of the membrane; the sequence is RGFCVGQFTFLKDP. A helical transmembrane segment spans residues 188–205; sequence WNWLDFMVISMAYLTELV. Residues 206 to 211 lie on the Extracellular side of the membrane; it reads DLGNVS. Asn-209 carries N-linked (GlcNAc...) asparagine glycosylation. A helical membrane pass occupies residues 212–228; it reads VLRTFRVLRALKTITVI. At 229 to 247 the chain is on the cytoplasmic side; that stretch reads PGLKTIVGALIQSVKKLAD. The chain crosses the membrane as a helical span at residues 248 to 267; the sequence is AMVLTVFCLSVFALIGLQLF. Residues 268–368 lie on the Extracellular side of the membrane; the sequence is MGNLRQKCVL…PNYGYTSYDS (101 aa). The cysteines at positions 275 and 337 are disulfide-linked. N-linked (GlcNAc...) asparagine glycosylation is found at Asn-284, Asn-304, and Asn-339. Cys-346 and Cys-352 are disulfide-bonded. An intramembrane region (pore-forming) is located at residues 369 to 393; sequence FGWAFLALFRLMTQDFWENLFQLTL. Topologically, residues 394 to 400 are extracellular; that stretch reads RAAGKTY. Residues 401–421 traverse the membrane as a helical segment; it reads MIFFVVVIFLGSFYLINLILA. Residues 422-515 lie on the Cytoplasmic side of the membrane; that stretch reads VVAMAYAEQN…RCLSAIVMDP (94 aa). One copy of the II repeat lies at 497 to 768; sequence CCSCWRHLKR…QIAVNRIKRA (272 aa). A helical membrane pass occupies residues 516-534; that stretch reads FVDLGITICIILNTIFMAM. At 535–545 the chain is on the extracellular side; the sequence is EHYPMSADFEE. A helical membrane pass occupies residues 546 to 565; sequence LLSVGNLVFTGIFTCEMVLK. At 566-579 the chain is on the cytoplasmic side; that stretch reads ILAMDPYFYFQVGW. A helical transmembrane segment spans residues 580–599; it reads NIFDSIIVTMSLVELGLANV. Residues 600 to 601 are Extracellular-facing; it reads QG. A helical membrane pass occupies residues 602–619; it reads LSVLRSFRLMRVFKLAKS. Residues 620-635 lie on the Cytoplasmic side of the membrane; that stretch reads WPTLNMLIKIIGNSVG. Residues 636–654 traverse the membrane as a helical segment; that stretch reads ALGNLTLVLAIIVFIFAVV. Topologically, residues 655–683 are extracellular; it reads GMQLFGKNYKDCVCRISEDCKLPRWHMND. Cys-668 and Cys-674 are joined by a disulfide. Positions 684–704 form an intramembrane region, pore-forming; sequence FFHAFLIIFRVLCGEWIDTMW. Residues 705–715 lie on the Extracellular side of the membrane; it reads DCMEVSGQTMC. Cys-706 and Cys-715 form a disulfide bridge. Residues 716-734 traverse the membrane as a helical segment; that stretch reads LIVYMMVLVIGNLVVLNLF. The Cytoplasmic segment spans residues 735–915; sequence LALLLSSFSG…ACFIIVENNY (181 aa). The tract at residues 824 to 865 is disordered; sequence EAESDSEDSDDDDVDEDKHSRCDESSFCSTVQDPEVKENEAD. Residues 825 to 838 show a composition bias toward acidic residues; it reads AESDSEDSDDDDVD. Residues 896-1211 form an III repeat; it reads KGKVWCNIRR…KKYYNAMKKL (316 aa). The chain crosses the membrane as a helical span at residues 916-933; that stretch reads FESFIVFMILLSSGALAF. Topologically, residues 934 to 946 are extracellular; that stretch reads EDIYLEKHQLIKT. A helical transmembrane segment spans residues 947–965; sequence ILEYADKVFTYVFVVEMVL. Topologically, residues 966–979 are cytoplasmic; that stretch reads KWFAYGFKSYFSNA. The chain crosses the membrane as a helical span at residues 980–998; the sequence is WCWLDFLIVDVSLVSLTAN. Topologically, residues 999 to 1006 are extracellular; it reads ILGYSELG. Residues 1007 to 1025 traverse the membrane as a helical segment; sequence AIKSLRTLRALRPLRALSR. At 1026–1042 the chain is on the cytoplasmic side; the sequence is FEGMRVVVNALVGAVPS. The chain crosses the membrane as a helical span at residues 1043-1062; it reads IFNVLLVCLIFWLIFSIMGV. The Extracellular portion of the chain corresponds to 1063–1115; that stretch reads NLFAGKFSYCFNETSQEQFDKKIVNNKTECIALIEANFTEVRWKNLKVNYDNV. A disulfide bridge connects residues Cys-1072 and Cys-1092. Asn-1074 and Asn-1088 each carry an N-linked (GlcNAc...) asparagine glycan. Positions 1116–1137 form an intramembrane region, pore-forming; the sequence is GIGYLSLLQVATFKGWMEIMYA. The Extracellular portion of the chain corresponds to 1138 to 1154; the sequence is AVDSRDVESQPIYEVNI. Residues 1155 to 1176 form a helical membrane-spanning segment; it reads YMYLYFVIFIIFGSFFTLNLFI. The Cytoplasmic portion of the chain corresponds to 1177-1239; it reads GVIIDNFNQQ…LVFDLVTKQI (63 aa). An important for rapid channel inactivation region spans residues 1195–1197; sequence IFM. The IV repeat unit spans residues 1220-1517; the sequence is VPRPENALQG…WEKFDPDATQ (298 aa). A helical transmembrane segment spans residues 1240–1257; the sequence is FDVFIMVLICLNMVTMMV. Residues 1258-1268 lie on the Extracellular side of the membrane; the sequence is ETDEQTKEKED. Residues 1269–1287 form a helical membrane-spanning segment; it reads ILYWINVIFIVIFTTECIL. At 1288 to 1299 the chain is on the cytoplasmic side; sequence KTIALRRHYFSI. A helical transmembrane segment spans residues 1300–1317; that stretch reads GWNVFDFVVVILSILGLL. Residues 1318–1330 lie on the Extracellular side of the membrane; sequence LADIIEKYFVSPT. Residues 1331–1347 form a helical membrane-spanning segment; sequence LFRVIRLARIGRVLRLI. Over 1348–1366 the chain is Cytoplasmic; it reads RGAKGIRTLLFALMMSLPA. The helical transmembrane segment at 1367–1384 threads the bilayer; sequence LFNIGLLLFLIMFIFSIF. Residues 1385-1406 are Extracellular-facing; it reads GMSNFAYVKKEAMIDDMFNFET. The pore-forming intramembrane region spans 1407–1429; that stretch reads FGNSMICLFMITTSAGWDGLLSP. Topologically, residues 1430-1458 are extracellular; sequence IMNKPPDCDPDLENPGTTVRGNCGSPAIG. Residues Cys-1437 and Cys-1452 are joined by a disulfide bond. The helical transmembrane segment at 1459 to 1481 threads the bilayer; that stretch reads IVFFSTYIIMSFLVVVNMYIAII. Topologically, residues 1482–1715 are cytoplasmic; the sequence is LENFNVATEE…LGTSERESLV (234 aa). The IQ domain occupies 1611 to 1640; sequence EEVAARVIQRAYRKYLLQRTVRLASFTYRE.

Belongs to the sodium channel (TC 1.A.1.10) family. Nav1.4/SCN4A subfamily. Voltage-gated sodium (Nav) channels consist of an ion-conducting alpha subunit which is functional on its own associated with regulatory beta subunits.

Its subcellular location is the cell membrane. The enzyme catalyses Na(+)(in) = Na(+)(out). In terms of biological role, pore-forming subunit of a voltage-gated sodium (Nav) channel that directly mediates the depolarizing phase of action potentials in excitable membranes. Navs, also called VGSCs (voltage-gated sodium channels) or VDSCs (voltage-dependent sodium channels), operate by switching between closed and open conformations depending on the voltage difference across the membrane. In the open conformation they allow Na(+) ions to selectively pass through the pore, along their electrochemical gradient. The influx of Na+ ions provokes membrane depolarization, initiating the propagation of electrical signals throughout cells and tissues. The sequence is that of Sodium channel protein type 4 subunit alpha B (scn4ab) from Tetraodon nigroviridis (Spotted green pufferfish).